A 724-amino-acid polypeptide reads, in one-letter code: Probable dipeptidyl-peptidase 5 (724 aa).

The signal sequence occupies residues 1–19; that stretch reads MGALTWLSVVAAAASTALA. 6 N-linked (GlcNAc...) asparagine glycosylation sites follow: asparagine 76, asparagine 97, asparagine 154, asparagine 257, asparagine 383, and asparagine 453. Serine 563 functions as the Charge relay system in the catalytic mechanism. Residue asparagine 610 is glycosylated (N-linked (GlcNAc...) asparagine). Active-site charge relay system residues include aspartate 646 and histidine 678.

It belongs to the peptidase S9C family.

It localises to the secreted. Its function is as follows. Extracellular dipeptidyl-peptidase which removes N-terminal dipeptides sequentially from polypeptides having unsubstituted N-termini. This is Probable dipeptidyl-peptidase 5 (dpp5) from Aspergillus clavatus (strain ATCC 1007 / CBS 513.65 / DSM 816 / NCTC 3887 / NRRL 1 / QM 1276 / 107).